The chain runs to 394 residues: DNA replication and repair protein RecF (394 aa).

30-37 (GRNGFGKT) serves as a coordination point for ATP.

This sequence belongs to the RecF family.

The protein localises to the cytoplasm. In terms of biological role, the RecF protein is involved in DNA metabolism; it is required for DNA replication and normal SOS inducibility. RecF binds preferentially to single-stranded, linear DNA. It also seems to bind ATP. The polypeptide is DNA replication and repair protein RecF (Corynebacterium glutamicum (strain ATCC 13032 / DSM 20300 / JCM 1318 / BCRC 11384 / CCUG 27702 / LMG 3730 / NBRC 12168 / NCIMB 10025 / NRRL B-2784 / 534)).